A 487-amino-acid chain; its full sequence is MTELFIDGAWVAGSGPVFASRNPGTDEIAWQGESASAADVDRAVASARRAFAGWSALDFEARCAIVKRFAALLTERKEAIATAIGRETGKPLWEARTEVASMAAKVGISIQAYQERTGEKRQDMADGVAVLRHRPHGVVAVFGPYNFPGHLPNGHIVPALIAGNTVVFKPSELAPGVARATVEVWQEAGLPAGVLNLVQGEKDTGIALANHRQIDGLFFTGSSDTGTLLHKQFGGRPEIVLALEMGGNNPLVIGEVEDIDAAVHHTIQSAFLSAGQRCTCARRIFVPQGAFGDRFLARFVDVTSKITADVFDADPQPFMGAVISARAAAKLVDAQSRLIEQGAKPIIAMTQRDPRLGFVNAAIVDVTGVANLPDEEHFGPLAQIVRYATFDDAIERANDTAFGLSAGLLADDENAWAHFRRTIRAGIVNWNRPTNGASSAAPFGGTGRSGNHRPSAYYAADYCAYPMASVESTQLTLPASLSPGLHF.

Gly-221–Gly-226 serves as a coordination point for NAD(+). Active-site residues include Glu-244 and Cys-278.

The protein belongs to the aldehyde dehydrogenase family. AstD subfamily.

The catalysed reaction is N-succinyl-L-glutamate 5-semialdehyde + NAD(+) + H2O = N-succinyl-L-glutamate + NADH + 2 H(+). It participates in amino-acid degradation; L-arginine degradation via AST pathway; L-glutamate and succinate from L-arginine: step 4/5. In terms of biological role, catalyzes the NAD-dependent reduction of succinylglutamate semialdehyde into succinylglutamate. This Burkholderia orbicola (strain MC0-3) protein is N-succinylglutamate 5-semialdehyde dehydrogenase.